A 93-amino-acid chain; its full sequence is Cobalt transport protein CbiN (93 aa).

The next 2 membrane-spanning stretches (helical) occupy residues 5–25 (LMLLAMVVALVILPFFINHGG) and 63–83 (LLFTLQGSLGAAVIFYILGYC).

Belongs to the CbiN family. Forms an energy-coupling factor (ECF) transporter complex composed of an ATP-binding protein (A component, CbiO), a transmembrane protein (T component, CbiQ) and 2 possible substrate-capture proteins (S components, CbiM and CbiN) of unknown stoichimetry.

Its subcellular location is the cell inner membrane. The protein operates within cofactor biosynthesis; adenosylcobalamin biosynthesis. Its function is as follows. Part of the energy-coupling factor (ECF) transporter complex CbiMNOQ involved in cobalt import. The chain is Cobalt transport protein CbiN from Salmonella arizonae (strain ATCC BAA-731 / CDC346-86 / RSK2980).